A 577-amino-acid chain; its full sequence is Eukaryotic translation initiation factor 3 subunit D (577 aa).

Residues 103 to 177 (DSTKTRFGRG…KDYDKPQRNR (75 aa)) are disordered. The segment covering 166-177 (GWKDYDKPQRNR) has biased composition (basic and acidic residues). The tract at residues 305 to 319 (TLDMVTVNENAADAP) is RNA gate. Residues 558 to 577 (GSFEDDGEGDVIEENVEEED) form a disordered region. Acidic residues predominate over residues 560-577 (FEDDGEGDVIEENVEEED).

The protein belongs to the eIF-3 subunit D family. In terms of assembly, component of the eukaryotic translation initiation factor 3 (eIF-3) complex.

It is found in the cytoplasm. In terms of biological role, mRNA cap-binding component of the eukaryotic translation initiation factor 3 (eIF-3) complex, which is involved in protein synthesis of a specialized repertoire of mRNAs and, together with other initiation factors, stimulates binding of mRNA and methionyl-tRNAi to the 40S ribosome. The eIF-3 complex specifically targets and initiates translation of a subset of mRNAs involved in cell proliferation. In the eIF-3 complex, eif3d specifically recognizes and binds the 7-methylguanosine cap of a subset of mRNAs. The sequence is that of Eukaryotic translation initiation factor 3 subunit D from Sclerotinia sclerotiorum (strain ATCC 18683 / 1980 / Ss-1) (White mold).